The chain runs to 112 residues: U-scoloptoxin(16)-Er5a (112 aa).

The signal sequence occupies residues 1–26 (MNTVSVVQFLAVGCAVFVLYGRGVFA).

The protein belongs to the scoloptoxin-16 family. Post-translationally, contains 2 disulfide bonds. Expressed by the venom gland.

Its subcellular location is the secreted. The sequence is that of U-scoloptoxin(16)-Er5a from Ethmostigmus rubripes (Giant centipede).